Here is a 218-residue protein sequence, read N- to C-terminus: tRNA (guanine-N(7)-)-methyltransferase (218 aa).

Residues Glu-46, Glu-71, Asp-98, and Asp-120 each coordinate S-adenosyl-L-methionine. Residue Asp-120 is part of the active site. Lys-124 is a binding site for substrate. The segment at 126–131 (RHEKRR) is interaction with RNA. Residues Asp-156 and 196 to 199 (TEYE) each bind substrate.

It belongs to the class I-like SAM-binding methyltransferase superfamily. TrmB family.

The enzyme catalyses guanosine(46) in tRNA + S-adenosyl-L-methionine = N(7)-methylguanosine(46) in tRNA + S-adenosyl-L-homocysteine. The protein operates within tRNA modification; N(7)-methylguanine-tRNA biosynthesis. In terms of biological role, catalyzes the formation of N(7)-methylguanine at position 46 (m7G46) in tRNA. This is tRNA (guanine-N(7)-)-methyltransferase from Lactobacillus johnsonii (strain CNCM I-12250 / La1 / NCC 533).